We begin with the raw amino-acid sequence, 374 residues long: UPF0754 membrane protein SA1664 (374 aa).

2 helical membrane-spanning segments follow: residues 4–24 (LFII…TNVI) and 354–374 (SLGF…AIFV).

It belongs to the UPF0754 family.

It is found in the cell membrane. This Staphylococcus aureus (strain N315) protein is UPF0754 membrane protein SA1664.